The primary structure comprises 251 residues: Aquaporin (251 aa).

At 1–11 (MAKEALKTLQS) the chain is on the cytoplasmic side. A helical membrane pass occupies residues 12 to 32 (MFGEMVASFVFGFAVYSAILG). At 33 to 42 (SSISQSSADK) the chain is on the extracellular side. Residues 43 to 63 (VIVGLTVGFSGIGVIYSFCDV) form a helical membrane-spanning segment. Topologically, residues 64-86 (TIAHFNPAITLAAILTSKIDVLQ) are cytoplasmic. Positions 69-71 (NPA) match the NPA motif. Residues 87 to 107 (GLGYMLAQYIGFMLAVCALLV) traverse the membrane as a helical segment. The Extracellular segment spans residues 108–133 (CSPVEYKETLDTIRPGPTDFGATSLN). A helical transmembrane segment spans residues 134-154 (VFFAEFFLTAIFVHIVFATAV). At 155–179 (NPYKPKVDTEGKFVDPDEKEPVDRR) the chain is on the cytoplasmic side. A helical transmembrane segment spans residues 180–200 (ITAPLCIGLTLGFLAFMGLAS). The Extracellular portion of the chain corresponds to 201–224 (SGGAFNPGLTFAPMAMSNTWSHFW). The NPG signature appears at 206 to 208 (NPG). The chain crosses the membrane as a helical span at residues 225–245 (IYLGGQYLGGLTGGLLQVLVL). Over 246 to 251 (YKLSSD) the chain is Cytoplasmic.

This sequence belongs to the MIP/aquaporin (TC 1.A.8) family.

Its subcellular location is the cell membrane. Water channel required to facilitate the transport of water across membranes. Involved in osmotolerance. The polypeptide is Aquaporin (AQP) (Encephalitozoon intestinalis (Microsporidian parasite)).